A 171-amino-acid polypeptide reads, in one-letter code: MSKDMLVNEGIRAREVRLIGANGDQIGVKSKAEALDMARNVNLDLVCVAPNAKPPVCRIMDYGKYRYEQQKKDKEARKKQKTINVKEVRLSPTIEDHDFNTKLRNARKFLSKGDKVKAAIRFRGRAITHSEIGRNVLERLAKECEDIAIVEAKPKMEGRSMFLVLAPKTDK.

It belongs to the IF-3 family. As to quaternary structure, monomer.

The protein localises to the cytoplasm. IF-3 binds to the 30S ribosomal subunit and shifts the equilibrium between 70S ribosomes and their 50S and 30S subunits in favor of the free subunits, thus enhancing the availability of 30S subunits on which protein synthesis initiation begins. This Halalkalibacterium halodurans (strain ATCC BAA-125 / DSM 18197 / FERM 7344 / JCM 9153 / C-125) (Bacillus halodurans) protein is Translation initiation factor IF-3.